Consider the following 127-residue polypeptide: MKAQEIISSIEAEEIEKLKQNSKKKIPLLYVGDTVKVGVKIIEGGKERVQPYEGTIIAMRNGGINETITVRRVFQGVGVERVFLLHSPRIANIKLIRRGKVRRAKLYYLRGRVGKATRVKQRFDRSL.

The protein belongs to the bacterial ribosomal protein bL19 family.

This protein is located at the 30S-50S ribosomal subunit interface and may play a role in the structure and function of the aminoacyl-tRNA binding site. The sequence is that of Large ribosomal subunit protein bL19 from Trichodesmium erythraeum (strain IMS101).